Reading from the N-terminus, the 185-residue chain is Ribosome-recycling factor (185 aa).

Positions 138–185 are disordered; sequence ALKKQEKDGEITEDEERRLEKEVQKVTDESTKKIDQMADNKRKEIIQG.

It belongs to the RRF family.

It localises to the cytoplasm. Its function is as follows. Responsible for the release of ribosomes from messenger RNA at the termination of protein biosynthesis. May increase the efficiency of translation by recycling ribosomes from one round of translation to another. The polypeptide is Ribosome-recycling factor (Lactobacillus delbrueckii subsp. bulgaricus (strain ATCC BAA-365 / Lb-18)).